A 292-amino-acid polypeptide reads, in one-letter code: 4-hydroxy-tetrahydrodipicolinate synthase (292 aa).

T45 is a binding site for pyruvate. The active-site Proton donor/acceptor is Y133. The active-site Schiff-base intermediate with substrate is K162. I204 is a binding site for pyruvate.

Belongs to the DapA family. In terms of assembly, homotetramer; dimer of dimers.

The protein localises to the cytoplasm. The catalysed reaction is L-aspartate 4-semialdehyde + pyruvate = (2S,4S)-4-hydroxy-2,3,4,5-tetrahydrodipicolinate + H2O + H(+). The protein operates within amino-acid biosynthesis; L-lysine biosynthesis via DAP pathway; (S)-tetrahydrodipicolinate from L-aspartate: step 3/4. In terms of biological role, catalyzes the condensation of (S)-aspartate-beta-semialdehyde [(S)-ASA] and pyruvate to 4-hydroxy-tetrahydrodipicolinate (HTPA). This Nitratidesulfovibrio vulgaris (strain DSM 19637 / Miyazaki F) (Desulfovibrio vulgaris) protein is 4-hydroxy-tetrahydrodipicolinate synthase.